The sequence spans 472 residues: Doublesex- and mab-3-related transcription factor 3 (472 aa).

The DM DNA-binding region spans 29–76 (CARCRNHGVLSWLKGHKRYCRFKDCTCEKCILIIERQRVMAAQVALRR). Disordered regions lie at residues 89-128 (DSLR…AELA) and 155-191 (EERL…GCFT). The segment covering 95–123 (PGPPPPGDAVAAPQPPPASQPSQPQPPRP) has biased composition (pro residues). The segment covering 155–179 (EERLGDGKSADNTEVFSDKDTDQRS) has biased composition (basic and acidic residues). One can recognise a DMA domain in the interval 249-284 (RPPLEVLKKIFPNQKPTVLELILKGCGGDLVSAVEV). The interval 430-472 (TEDPRISIPDDGCPFVSKQSIYTEDDYDERSDSSDSRTLNTSS) is disordered.

This sequence belongs to the DMRT family. In terms of assembly, may homodimerize. Expressed in testis.

Its subcellular location is the nucleus. Its function is as follows. Probable transcription factor that plays a role in configuring the spinal circuits controlling stride in vertebrates. Involved in neuronal specification within specific subdivision of spinal cord neurons and in the development of a coordinated locomotor network controlling limb movements. May regulate transcription during sexual development. This Homo sapiens (Human) protein is Doublesex- and mab-3-related transcription factor 3 (DMRT3).